Consider the following 222-residue polypeptide: Ribosomal RNA small subunit methyltransferase I (222 aa).

The protein belongs to the methyltransferase superfamily. RsmI family.

The protein localises to the cytoplasm. It catalyses the reaction cytidine(1402) in 16S rRNA + S-adenosyl-L-methionine = 2'-O-methylcytidine(1402) in 16S rRNA + S-adenosyl-L-homocysteine + H(+). Its function is as follows. Catalyzes the 2'-O-methylation of the ribose of cytidine 1402 (C1402) in 16S rRNA. The polypeptide is Ribosomal RNA small subunit methyltransferase I (Mycoplasmopsis pulmonis (strain UAB CTIP) (Mycoplasma pulmonis)).